The chain runs to 1076 residues: Carbamoyl phosphate synthase large chain (1076 aa).

Residues 1–403 form a carboxyphosphate synthetic domain region; the sequence is MPKRTDIQSI…SLQKALRGLE (403 aa). Arginine 129, arginine 169, glycine 175, glycine 176, glutamate 208, leucine 210, glutamate 215, glycine 241, isoleucine 242, histidine 243, glutamine 285, and glutamate 299 together coordinate ATP. One can recognise an ATP-grasp 1 domain in the interval 133-328; the sequence is DKAMKSIGLE…IAKVAAKLAV (196 aa). Residues glutamine 285, glutamate 299, and asparagine 301 each coordinate Mg(2+). Mn(2+)-binding residues include glutamine 285, glutamate 299, and asparagine 301. Positions 404–553 are oligomerization domain; the sequence is VGAAGLDEKV…YSTYDEECEA (150 aa). The interval 554-935 is carbamoyl phosphate synthetic domain; the sequence is NPTDKDKIMV…AYAKAELGCG (382 aa). One can recognise an ATP-grasp 2 domain in the interval 678–869; it reads QQAVQRLGLK…LAKIAARVMV (192 aa). Residues arginine 714, arginine 753, leucine 755, glutamate 760, glycine 785, valine 786, histidine 787, serine 788, glutamine 828, and glutamate 840 each coordinate ATP. Mg(2+) contacts are provided by glutamine 828, glutamate 840, and asparagine 842. The Mn(2+) site is built by glutamine 828, glutamate 840, and asparagine 842. Positions 936 to 1076 constitute an MGS-like domain; sequence SVYPEGGRAL…LHARVKANQA (141 aa). The tract at residues 936–1076 is allosteric domain; it reads SVYPEGGRAL…LHARVKANQA (141 aa).

It belongs to the CarB family. In terms of assembly, composed of two chains; the small (or glutamine) chain promotes the hydrolysis of glutamine to ammonia, which is used by the large (or ammonia) chain to synthesize carbamoyl phosphate. Tetramer of heterodimers (alpha,beta)4. Requires Mg(2+) as cofactor. Mn(2+) serves as cofactor.

The enzyme catalyses hydrogencarbonate + L-glutamine + 2 ATP + H2O = carbamoyl phosphate + L-glutamate + 2 ADP + phosphate + 2 H(+). It carries out the reaction hydrogencarbonate + NH4(+) + 2 ATP = carbamoyl phosphate + 2 ADP + phosphate + 2 H(+). It functions in the pathway amino-acid biosynthesis; L-arginine biosynthesis; carbamoyl phosphate from bicarbonate: step 1/1. The protein operates within pyrimidine metabolism; UMP biosynthesis via de novo pathway; (S)-dihydroorotate from bicarbonate: step 1/3. Its function is as follows. Large subunit of the glutamine-dependent carbamoyl phosphate synthetase (CPSase). CPSase catalyzes the formation of carbamoyl phosphate from the ammonia moiety of glutamine, carbonate, and phosphate donated by ATP, constituting the first step of 2 biosynthetic pathways, one leading to arginine and/or urea and the other to pyrimidine nucleotides. The large subunit (synthetase) binds the substrates ammonia (free or transferred from glutamine from the small subunit), hydrogencarbonate and ATP and carries out an ATP-coupled ligase reaction, activating hydrogencarbonate by forming carboxy phosphate which reacts with ammonia to form carbamoyl phosphate. The polypeptide is Carbamoyl phosphate synthase large chain (Vibrio cholerae serotype O1 (strain ATCC 39315 / El Tor Inaba N16961)).